The chain runs to 122 residues: Large ribosomal subunit protein uL14 (122 aa).

The protein belongs to the universal ribosomal protein uL14 family. Part of the 50S ribosomal subunit. Forms a cluster with proteins L3 and L19. In the 70S ribosome, L14 and L19 interact and together make contacts with the 16S rRNA in bridges B5 and B8.

Its function is as follows. Binds to 23S rRNA. Forms part of two intersubunit bridges in the 70S ribosome. The sequence is that of Large ribosomal subunit protein uL14 from Herminiimonas arsenicoxydans.